Here is a 139-residue protein sequence, read N- to C-terminus: Maximins 4/H3 type 6 (139 aa).

Residues 1-18 (MNFKYIVAVSFLIASAYA) form the signal peptide. Residues 19 to 43 (RSVQNDEQSLSQRDVLEEESLREIR) constitute a propeptide that is removed on maturation. Asn-70 is modified (asparagine amide). Positions 74-118 (TAEDHEVMKRLEAVMRDLDSLDHPEEASERETRGFNQDEIAKEKR) are excised as a propeptide. The residue at position 138 (Ile-138) is an Isoleucine amide.

The protein belongs to the bombinin family. As to expression, expressed by the skin glands.

The protein resides in the secreted. In terms of biological role, maximin-4 shows antibacterial activity against both Gram-positive and Gram-negative bacteria. It also shows antimicrobial activity against the fungus C.albicans, but not against A.flavus nor P.uticale. It has little hemolytic activity. It does not possess a significant cytotoxicity against tumor cell lines. It does not possess a significant anti-HIV activity. Its function is as follows. Maximin-H3 shows antibacterial activity against both Gram-positive and Gram-negative bacteria. It also shows antimicrobial activity against the fungus C.albicans. Shows strong hemolytic activity. The protein is Maximins 4/H3 type 6 of Bombina maxima (Giant fire-bellied toad).